The primary structure comprises 181 residues: Alkyl hydroperoxide reductase AhpD (181 aa).

The Proton donor role is filled by cysteine 130. Cysteines 130 and 133 form a disulfide. Cysteine 133 functions as the Cysteine sulfenic acid (-SOH) intermediate in the catalytic mechanism.

This sequence belongs to the AhpD family.

The catalysed reaction is N(6)-[(R)-dihydrolipoyl]-L-lysyl-[lipoyl-carrier protein] + a hydroperoxide = N(6)-[(R)-lipoyl]-L-lysyl-[lipoyl-carrier protein] + an alcohol + H2O. In terms of biological role, antioxidant protein with alkyl hydroperoxidase activity. Required for the reduction of the AhpC active site cysteine residues and for the regeneration of the AhpC enzyme activity. This chain is Alkyl hydroperoxide reductase AhpD, found in Gluconacetobacter diazotrophicus (strain ATCC 49037 / DSM 5601 / CCUG 37298 / CIP 103539 / LMG 7603 / PAl5).